The sequence spans 426 residues: Histidine--tRNA ligase (426 aa).

It belongs to the class-II aminoacyl-tRNA synthetase family. Homodimer.

It is found in the cytoplasm. The enzyme catalyses tRNA(His) + L-histidine + ATP = L-histidyl-tRNA(His) + AMP + diphosphate + H(+). The sequence is that of Histidine--tRNA ligase from Hydrogenovibrio crunogenus (strain DSM 25203 / XCL-2) (Thiomicrospira crunogena).